The following is a 2350-amino-acid chain: Probable JmjC domain-containing histone demethylation protein 2C (2350 aa).

2 disordered regions span residues 96-302 (TRAQ…LQEC) and 314-336 (PKDRLVSRTPTPKCVTDIKNDTH). Over residues 98-127 (AQANSPRPAMNSQAAVPKQNTHQQQQQRSI) the composition is skewed to polar residues. S135 and S138 each carry phosphoserine. A compositionally biased stretch (basic and acidic residues) spans 141 to 160 (DEEKMKEDKYDCVSRGENPK). A compositionally biased stretch (basic residues) spans 161-171 (GKNKHVVTKRR). Over residues 172 to 189 (KPEEAEKRLSMKRLRTDN) the composition is skewed to basic and acidic residues. The span at 190-200 (ASDASESSDAE) shows a compositional bias: low complexity. 2 positions are modified to phosphoserine: S191 and S194. A compositionally biased stretch (basic and acidic residues) spans 257–280 (QEDKNHNEGEKPKSTDSHLQDKMT). Residues 281–302 (LRSSEQATVADHNSNDSVLQEC) are compositionally biased toward polar residues. Residues S294 and S320 each carry the phosphoserine modification. T324 is modified (phosphothreonine). A phosphoserine mark is found at S420, S436, S457, S458, S460, S471, and S762. Disordered regions lie at residues 426–486 (SVTE…NSQA), 747–766 (SSAEPHRPHKITVHSSPPLT), 859–883 (RENYSRVVPSSSSPKSHAIKQDKDV), 1030–1083 (RKES…DQSL), and 1422–1508 (EKVS…VPRS). Composition is skewed to low complexity over residues 863–874 (SRVVPSSSSPKS) and 1034–1045 (SYSSLSPPTLTP). Polar residues predominate over residues 1071–1083 (SQSNFKNSSDQSL). The span at 1454-1463 (KRQPKPTYKK) shows a compositional bias: basic residues. Basic and acidic residues predominate over residues 1464-1480 (KQNDLQKRKGEVEEDSK). A C6-type zinc finger spans residues 1657–1682 (CDACEATLFNVHWVCRKCGFVACLDC). Residues 1776–1818 (KTSVSLPESQQQNSPQKSQTNGNSSPGSASTDSRLTPPESQSP) show a composition bias toward polar residues. Residues 1776-1874 (KTSVSLPESQ…PASQSNEQGS (99 aa)) are disordered. S1800 is subject to Phosphoserine. Residues 1826-1849 (AEQKSREEKQENKEFTLEREIKED) are compositionally biased toward basic and acidic residues. Residues 1855-1874 (SDSPNGSTSPPASQSNEQGS) show a composition bias toward polar residues. The short motif at 1876-1880 (LRDLL) is the LXXLL motif element. The tract at residues 1933–1962 (PNKTSKINIKSEPNEEPKESSLPATDESNK) is disordered. K1942 participates in a covalent cross-link: Glycyl lysine isopeptide (Lys-Gly) (interchain with G-Cter in SUMO2). A JmjC domain is found at 2084–2308 (MPTRYEDFLR…QSFHLTQELR (225 aa)). Fe cation contacts are provided by H2146, E2148, and H2276.

The protein belongs to the JHDM2 histone demethylase family. It depends on Fe(2+) as a cofactor.

Its subcellular location is the nucleus. In terms of biological role, probable histone demethylase that specifically demethylates 'Lys-9' of histone H3, thereby playing a central role in histone code. Demethylation of Lys residue generates formaldehyde and succinate. May be involved in hormone-dependent transcriptional activation, by participating in recruitment to androgen-receptor target genes. The polypeptide is Probable JmjC domain-containing histone demethylation protein 2C (Jmjd1c) (Mus musculus (Mouse)).